The primary structure comprises 1367 residues: Dynactin, 150 kDa isoform (1367 aa).

The region spanning 28–70 (GETAFAPGTWVGIELDEPSGKNDGSVQGERYFNCEMGYGMFVR) is the CAP-Gly domain. Positions 76–318 (VIAQPPPPPP…NLKATTITPR (243 aa)) are disordered. Low complexity-rich tracts occupy residues 88 to 99 (TFRRSVTTRPTS) and 132 to 149 (PSRT…RSPT). Residues 150–163 (KQLATASSSGNPSR) show a composition bias toward polar residues. 2 stretches are compositionally biased toward low complexity: residues 164-190 (SGTP…SRHS) and 243-259 (STGS…KRGS). 3 coiled-coil regions span residues 321-598 (ITNT…MQEE), 637-698 (LQSD…EAEQ), and 1039-1199 (AELK…RARL).

This sequence belongs to the dynactin 150 kDa subunit family. In terms of assembly, large macromolecular complex of at least 10 components; p150(glued) binds directly to microtubules and to cytoplasmic dynein.

The protein localises to the cytoplasm. It is found in the cytoskeleton. Required for the cytoplasmic dynein-driven retrograde movement of vesicles and organelles along microtubules. Dynein-dynactin interaction is a key component of the mechanism of axonal transport of vesicles and organelles. This chain is Dynactin, 150 kDa isoform (ro-3), found in Neurospora crassa (strain ATCC 24698 / 74-OR23-1A / CBS 708.71 / DSM 1257 / FGSC 987).